A 329-amino-acid chain; its full sequence is Glycerol-3-phosphate dehydrogenase [NAD(P)+] (329 aa).

NADPH is bound by residues tryptophan 11, arginine 31, and lysine 105. Residues lysine 105, glycine 135, and threonine 137 each contribute to the sn-glycerol 3-phosphate site. Alanine 139 provides a ligand contact to NADPH. Sn-glycerol 3-phosphate contacts are provided by lysine 190, aspartate 243, serine 253, arginine 254, and asparagine 255. Catalysis depends on lysine 190, which acts as the Proton acceptor. Arginine 254 is a binding site for NADPH. NADPH contacts are provided by valine 277 and glutamate 279.

It belongs to the NAD-dependent glycerol-3-phosphate dehydrogenase family.

It localises to the cytoplasm. The catalysed reaction is sn-glycerol 3-phosphate + NAD(+) = dihydroxyacetone phosphate + NADH + H(+). It carries out the reaction sn-glycerol 3-phosphate + NADP(+) = dihydroxyacetone phosphate + NADPH + H(+). It functions in the pathway membrane lipid metabolism; glycerophospholipid metabolism. Its function is as follows. Catalyzes the reduction of the glycolytic intermediate dihydroxyacetone phosphate (DHAP) to sn-glycerol 3-phosphate (G3P), the key precursor for phospholipid synthesis. This is Glycerol-3-phosphate dehydrogenase [NAD(P)+] from Maridesulfovibrio salexigens (strain ATCC 14822 / DSM 2638 / NCIMB 8403 / VKM B-1763) (Desulfovibrio salexigens).